A 325-amino-acid polypeptide reads, in one-letter code: Phospho-N-acetylmuramoyl-pentapeptide-transferase (325 aa).

A run of 10 helical transmembrane segments spans residues 5–25 (VLLL…PIFI), 57–77 (LMIL…LSIF), 81–101 (VLLL…DDFI), 117–137 (LIGQ…MGLS), 146–166 (SLSI…LVGA), 178–198 (GLVA…AWAT), 200–220 (YFEV…FLVF), 227–247 (VFMG…IAIM), 252–272 (ILLI…IIQV), and 304–324 (VTFW…EVWI).

This sequence belongs to the glycosyltransferase 4 family. MraY subfamily. Requires Mg(2+) as cofactor.

The protein localises to the cell membrane. It carries out the reaction UDP-N-acetyl-alpha-D-muramoyl-L-alanyl-gamma-D-glutamyl-meso-2,6-diaminopimeloyl-D-alanyl-D-alanine + di-trans,octa-cis-undecaprenyl phosphate = di-trans,octa-cis-undecaprenyl diphospho-N-acetyl-alpha-D-muramoyl-L-alanyl-D-glutamyl-meso-2,6-diaminopimeloyl-D-alanyl-D-alanine + UMP. It participates in cell wall biogenesis; peptidoglycan biosynthesis. In terms of biological role, catalyzes the initial step of the lipid cycle reactions in the biosynthesis of the cell wall peptidoglycan: transfers peptidoglycan precursor phospho-MurNAc-pentapeptide from UDP-MurNAc-pentapeptide onto the lipid carrier undecaprenyl phosphate, yielding undecaprenyl-pyrophosphoryl-MurNAc-pentapeptide, known as lipid I. In Halalkalibacterium halodurans (strain ATCC BAA-125 / DSM 18197 / FERM 7344 / JCM 9153 / C-125) (Bacillus halodurans), this protein is Phospho-N-acetylmuramoyl-pentapeptide-transferase.